Consider the following 1128-residue polypeptide: Apoptosis-stimulating of p53 protein 2 (1128 aa).

Disordered regions lie at residues 86 to 106 (PGRD…RNGV) and 322 to 341 (KENL…ASAP). The span at 322-339 (KENLPVSSDGNLPQQAAS) shows a compositional bias: polar residues. Positions 332–348 (NLPQQAASAPSRVAAVG) are interaction with APPBP1. Position 480 is a phosphoserine (Ser-480). Disordered stretches follow at residues 494 to 598 (NVAK…LPPF) and 655 to 706 (NQQQ…LPFL). A compositionally biased stretch (polar residues) spans 528 to 537 (GSSQQLSTVV). Residues Ser-556, Ser-569, Ser-572, and Ser-576 each carry the phosphoserine modification. Over residues 558–575 (SIPSVGQDQTLSPGSKQE) the composition is skewed to polar residues. Residues 655 to 670 (NQQQHPENIYSNSQGK) show a composition bias toward polar residues. Ser-698, Ser-714, and Ser-737 each carry phosphoserine. Disordered regions lie at residues 724-748 (KLSN…NGPN) and 802-909 (SLVP…TNLR). Over residues 840-849 (NSPNLQNNPE) the composition is skewed to low complexity. Residues 866–875 (YPPYPPPPYP) carry the SH3-binding motif. Residues 867–876 (PPYPPPPYPS) are compositionally biased toward pro residues. The mediates interaction with APC2 stretch occupies residues 876–1128 (SGEPEGPGED…RIKPRQRSLA (253 aa)). ANK repeat units lie at residues 926-957 (PLAL…LPND), 958-990 (EGIT…AADS), 991-1024 (DGWT…MTYS), and 1025-1067 (DMQT…ALWD). The SH3 domain maps to 1057–1119 (MNKGVIYALW…PRNLLGLYPR (63 aa)).

The protein belongs to the ASPP family. Interacts with P53/TP53; the interaction promotes pro-apoptotic activity. Interacts with BCL2. Interacts with protein phosphatase 1. Interacts with RELA NF-kappa-B subunit. This interaction probably prevents the activation of apoptosis, possibly by preventing its interaction with TP53. Interacts with APC2 and NAE1. Interacts with DDX42 (via the C-terminus); the interaction is not inhibited by TP53BP2 ubiquitination and is independent of p53/TP53. Widely expressed. Expressed in spleen, thymus, prostate, testis, ovary, small intestine, colon and peripheral blood leukocyte. Reduced expression in breast carcinomas expressing a wild-type TP53 protein. Overexpressed in lung cancer cell lines.

Its subcellular location is the cytoplasm. It localises to the perinuclear region. It is found in the nucleus. In terms of biological role, regulator that plays a central role in regulation of apoptosis and cell growth via its interactions with proteins such as TP53. Regulates TP53 by enhancing the DNA binding and transactivation function of TP53 on the promoters of proapoptotic genes in vivo. Inhibits the ability of NAE1 to conjugate NEDD8 to CUL1, and thereby decreases NAE1 ability to induce apoptosis. Impedes cell cycle progression at G2/M. Its apoptosis-stimulating activity is inhibited by its interaction with DDX42. The chain is Apoptosis-stimulating of p53 protein 2 (TP53BP2) from Homo sapiens (Human).